Here is a 280-residue protein sequence, read N- to C-terminus: Large ribosomal subunit protein uL2 (280 aa).

The segment at 215–280 (GRRPHVRGSA…IQRANDKKEK (66 aa)) is disordered.

Belongs to the universal ribosomal protein uL2 family. In terms of assembly, part of the 50S ribosomal subunit. Forms a bridge to the 30S subunit in the 70S ribosome.

In terms of biological role, one of the primary rRNA binding proteins. Required for association of the 30S and 50S subunits to form the 70S ribosome, for tRNA binding and peptide bond formation. It has been suggested to have peptidyltransferase activity; this is somewhat controversial. Makes several contacts with the 16S rRNA in the 70S ribosome. In Dictyoglomus thermophilum (strain ATCC 35947 / DSM 3960 / H-6-12), this protein is Large ribosomal subunit protein uL2.